The sequence spans 171 residues: NADH-quinone oxidoreductase subunit I (171 aa).

4Fe-4S ferredoxin-type domains follow at residues 41-71 (LTRD…VVKT) and 81-110 (ESFT…LTPD). 8 residues coordinate [4Fe-4S] cluster: Cys-51, Cys-54, Cys-57, Cys-61, Cys-90, Cys-93, Cys-96, and Cys-100.

It belongs to the complex I 23 kDa subunit family. As to quaternary structure, NDH-1 is composed of 13 different subunits. Subunits NuoA, H, J, K, L, M, N constitute the membrane sector of the complex. Requires [4Fe-4S] cluster as cofactor.

The protein resides in the cell inner membrane. It catalyses the reaction a quinone + NADH + 5 H(+)(in) = a quinol + NAD(+) + 4 H(+)(out). Functionally, NDH-1 shuttles electrons from NADH, via FMN and iron-sulfur (Fe-S) centers, to quinones in the respiratory chain. The immediate electron acceptor for the enzyme in this species is believed to be ubiquinone. Couples the redox reaction to proton translocation (for every two electrons transferred, four hydrogen ions are translocated across the cytoplasmic membrane), and thus conserves the redox energy in a proton gradient. The polypeptide is NADH-quinone oxidoreductase subunit I (Shewanella woodyi (strain ATCC 51908 / MS32)).